Consider the following 173-residue polypeptide: MVTVREAKLEDIKDIAKVHVDSWRTTYHEIIPIDYLNSLNYKEFEDKWKSRSLKGVFVAQDEKGSVFGFASFGPIRSEQEGYDGELYAIYLLEERQRQGAGRALLAKGAEFLLQHGFSSMFVWVIEQNPSIIFYQAYSPERVAEDNFEIAGVRLKEVGLGWPDLSALKTLLNR.

In terms of domain architecture, N-acetyltransferase spans 2–171 (VTVREAKLED…PDLSALKTLL (170 aa)).

Belongs to the acetyltransferase family.

This is an uncharacterized protein from Bacillus subtilis (strain 168).